Here is a 368-residue protein sequence, read N- to C-terminus: Cyclic GMP-AMP synthase-like receptor (368 aa).

Residues Ser60 and 72 to 74 (EYD) each bind ATP. Mg(2+)-binding residues include Glu72, Asp74, and Asp190. GTP is bound by residues Asp190 and 229–236 (RASFYRQE). ATP-binding positions include 233-236 (YRQE), Lys254, and 268-272 (SYFIK).

Belongs to the mab-21 family. Mg(2+) serves as cofactor. It depends on Mn(2+) as a cofactor.

It carries out the reaction GTP + ATP = 3',2'-cGAMP + 2 diphosphate. It catalyses the reaction GTP + ATP = pppA(2'-5')pG + diphosphate. The enzyme catalyses pppA(2'-5')pG = 3',2'-cGAMP + diphosphate. With respect to regulation, the enzyme activity is specifically activated by double-stranded RNA (dsRNA). Functionally, nucleotidyltransferase that catalyzes the formation of cyclic GMP-AMP (3',2'-cGAMP) from ATP and GTP and plays a key role in innate immunity. Synthesizes 3',2'-cGAMP in a two-step reaction through production of the linear intermediate pppA(2'-5')pG. Acts as a key sensor of double-stranded RNA (dsRNA), the presence of dsRNA in the cytoplasm being a danger signal that triggers the immune responses. Directly binds dsRNA, activating the nucleotidyltransferase activity, leading to synthesis of 3',2'-cGAMP, a second messenger that binds to and activates Sting, thereby triggering the antiviral immune response via activation of the NF-kappa-B transcription factor Rel (Relish). This Lucilia cuprina (Green bottle fly) protein is Cyclic GMP-AMP synthase-like receptor.